The following is a 260-amino-acid chain: MVLNINSFYKNCRGEFMRAVFIYHKNNQRMEKFYKNLLNEPDFCRICDDCYNCRGNWTFKNNVKNIVIEEVYEEFVDNPYDYLPELPEGDICIAQLHEDLLYELPLLLKEKGYKALIVPSETPHDLSLALRRDLKRVCSNYNIEFENPKPFCSLEKKEGNEYINKFIDYFKIGKPELEIEVENGLIKDVKVKISAPCGETYYIAKRLKGKAIDDLKEEIANAHHNYPCLASMEMDKELGDTILHKAGYIAFEVVEKALKK.

It participates in pyrimidine metabolism; dTTP biosynthesis. Functionally, is able to catalyze the biosynthesis of dTMP using dUMP, tetrahydrofolate and formaldehyde in vitro, i.e. a reaction equivalent to that catalyzed by bacterial thymidylate synthases (EC 2.1.1.45). However, M.jannaschii like most methanogenic Archaea lacks folates, thus the physiological cosubstrate is unknown but is likely one of the non-methylated methanopterin biosynthetic intermediates. The protein is Thymidylate synthase of Methanocaldococcus jannaschii (strain ATCC 43067 / DSM 2661 / JAL-1 / JCM 10045 / NBRC 100440) (Methanococcus jannaschii).